A 152-amino-acid chain; its full sequence is Sec-independent protein translocase protein TatB (152 aa).

Residues 1 to 21 (MLDVGFGELFCFGIIALLVLG) traverse the membrane as a helical segment.

The protein belongs to the TatB family. In terms of assembly, the Tat system comprises two distinct complexes: a TatABC complex, containing multiple copies of TatA, TatB and TatC subunits, and a separate TatA complex, containing only TatA subunits. Substrates initially bind to the TatABC complex, which probably triggers association of the separate TatA complex to form the active translocon.

It is found in the cell inner membrane. Its function is as follows. Part of the twin-arginine translocation (Tat) system that transports large folded proteins containing a characteristic twin-arginine motif in their signal peptide across membranes. Together with TatC, TatB is part of a receptor directly interacting with Tat signal peptides. TatB may form an oligomeric binding site that transiently accommodates folded Tat precursor proteins before their translocation. This Acinetobacter baylyi (strain ATCC 33305 / BD413 / ADP1) protein is Sec-independent protein translocase protein TatB.